A 786-amino-acid polypeptide reads, in one-letter code: MSKRGSLQDRASPSEETVKKAQKRRKPIKSCAFCRKRKLRCDQQKPMCSTCKTRGRSGCLYTEKFTHKIETKELFGSTPNIELLKRIEDLEKRLDDKELTEKDVALSTSPFRNPYANFYYLQCKGSGRRIVYGPTSLRTHLSNDDNRFVNTYNQLWSKVKIERNRWKARHKWTMKPETQLLEGPPLEKTGSDILQQVCNVLPSFEQSSKIITDFFNTELETNEVSEVLDKTKIINDFTSSFLPSDELLPNGERRIEKLLPSTKKNYYKIGVILMILCIRHFYKNTPEEIEKFLIMLTGLSTAKVYFIERAQFLLLKYYHRELIWACGDDSHMISLVDLLCSTAIMLGLHLNIREIYKNQENIVGSMESLENLWVWIILSDFNVSLNIGRCLAINSSYFQVDECENGERLPKNTNNYSSTVFFDQSNSCMGKLKRFLRLARPMLDQIYDRSAFPDLAENCKKLRNFVETEFHPISYYTDSELISKVPLCEIKVLAQVLNLLLTFYSLRYLIYKEKSVVLENNILQTILVSFSLVINTTILCFNLDEKHFPEFFDHNCVHLPPFMALSLVYTNFLFPRASTGFCAFLYHKLTLFEKGYYLSSNIKDQEVTDWDLSTLNIPLDKAMNLLTAFKIHSDIFAKWSNDNNKQLRIIMARSYTFVINIALESIYRAVLEKVIKYRTEVENTWLQQLQDELNGSYSLTDNVNTPIDPSLSDLGVTSASPLAGNSPGLPPEEVRNNSENASHNNETGPIETELAQTISNEFWTAYNLGWEELMSQPDYKYLFDTQ.

The interval 1–25 is disordered; sequence MSKRGSLQDRASPSEETVKKAQKRR. The segment at residues 31–59 is a DNA-binding region (zn(2)-C6 fungal-type); it reads CAFCRKRKLRCDQQKPMCSTCKTRGRSGC. Residues 721 to 747 form a disordered region; the sequence is PLAGNSPGLPPEEVRNNSENASHNNET. The span at 737–747 shows a compositional bias: polar residues; the sequence is NSENASHNNET.

Its subcellular location is the cytoplasm. It is found in the nucleus. In terms of biological role, transcription factor involved in the regulation of multidrug resistance genes. Acts in concert with YRR1. In Saccharomyces cerevisiae (strain ATCC 204508 / S288c) (Baker's yeast), this protein is Zinc finger transcription factor YRM1 (YRM1).